The chain runs to 377 residues: uncharacterized protein (377 aa).

A disordered region spans residues 1 to 25 (MAQQTNVAGQKTEKQRKAPFRADHV). Over residues 11–24 (KTEKQRKAPFRADH) the composition is skewed to basic and acidic residues.

To B.subtilis YxjG.

This is an uncharacterized protein from Bacillus subtilis (strain 168).